The primary structure comprises 374 residues: Cyclin-D (374 aa).

Belongs to the cyclin family. Cyclin D subfamily.

The sequence is that of Cyclin-D (CycD) from Ostreococcus tauri.